Consider the following 128-residue polypeptide: RutC family protein BUsg_359 (128 aa).

It belongs to the RutC family.

In Buchnera aphidicola subsp. Schizaphis graminum (strain Sg), this protein is RutC family protein BUsg_359.